A 1230-amino-acid polypeptide reads, in one-letter code: Cullin-associated NEDD8-dissociated protein 1 (1230 aa).

The residue at position 2 (A2) is an N-acetylalanine. HEAT repeat units lie at residues 2 to 39 (ASAS…KDSI), 44 to 81 (DSER…KVKE), 83 to 119 (QVET…ELPP), 131 to 165 (CKKI…LSRQ), 171 to 208 (NFHP…SCGN), 210 to 247 (VFVD…QAGH), 248 to 282 (RIGE…FESF), 289 to 366 (EVYP…TRHE), 370 to 407 (EFYK…QTRP), 424 to 467 (PLTM…VLPG), 471 to 510 (QHIP…NHSP), and 515 to 552 (PHVQ…VIRP). An N6-acetyllysine modification is found at K55. The interval 315–344 (DEDEDENAMDADGGDDDDQGSDDEYSDDDD) is disordered. Position 335 is a phosphoserine (S335). S558 carries the post-translational modification Phosphoserine. 15 HEAT repeats span residues 563–602 (PYIK…NLGD), 606–643 (SDLP…LKID), 646–683 (PVLG…NYSD), 688–725 (AMID…VYPS), 729–768 (KISG…TGTN), 770–808 (LGYM…ALTR), 809–845 (ACPK…LGEV), 852–889 (SGQL…GNLP), 890–927 (EYLP…GLKP), 928–960 (YVEN…KLTL), 961–998 (IDPE…DHPQ), 1002–1039 (PLLK…NKPS), 1043–1097 (DLLD…DSCL), 1099–1133 (RLDI…LSTL), and 1140–1189 (QRLD…IPEA). K971 carries the N6-acetyllysine modification.

This sequence belongs to the CAND family. In terms of assembly, interacts with TBP. Part of a complex that contains CUL1 and RBX1. Interacts with unneddylated cullins: interacts with CUL1, CUL2, CUL3, CUL4A, CUL4B and CUL5. Does not bind neddylated CUL1. Interaction with cullins is abolished in presence of COMMD1, which antagonizes with CAND1 for interacting with cullins. Interacts with ERCC6. Interacts with DCUN1D1, DCUN1D2, DCUN1D3, DCUN1D4 and DCUN1D5; these interactions are bridged by cullins and strongly inhibits the neddylation of cullins.

The protein resides in the cytoplasm. The protein localises to the nucleus. In terms of biological role, key assembly factor of SCF (SKP1-CUL1-F-box protein) E3 ubiquitin ligase complexes that promotes the exchange of the substrate-recognition F-box subunit in SCF complexes, thereby playing a key role in the cellular repertoire of SCF complexes. Acts as a F-box protein exchange factor. The exchange activity of CAND1 is coupled with cycles of neddylation conjugation: in the deneddylated state, cullin-binding CAND1 binds CUL1-RBX1, increasing dissociation of the SCF complex and promoting exchange of the F-box protein. Probably plays a similar role in other cullin-RING E3 ubiquitin ligase complexes. This Bos taurus (Bovine) protein is Cullin-associated NEDD8-dissociated protein 1 (CAND1).